The primary structure comprises 150 residues: Arginine repressor (150 aa).

It belongs to the ArgR family.

The protein resides in the cytoplasm. The protein operates within amino-acid biosynthesis; L-arginine biosynthesis [regulation]. Its function is as follows. Regulates arginine biosynthesis genes. This is Arginine repressor from Finegoldia magna (strain ATCC 29328 / DSM 20472 / WAL 2508) (Peptostreptococcus magnus).